The primary structure comprises 213 residues: MICGVDEAGKGSVLGPMVIAGVGVGSTEMIDGFGLRDSKQLSPSERERLFVLIKKKCKVATVVISAAEIDAFRREMTLNTCVARAHAVVIAQLAPEIAYVDACDVNPFRYAETVRGYLSSPCEIVSEHHADSTYPVVSAASIVAKVTRDREIAKLAKKYGQIGSGYPSDPETIAYLNAYIDEHRIPPPIARKSWKTVSTLLAKKTQSSLTSFF.

Residues 1 to 206 (MICGVDEAGK…VSTLLAKKTQ (206 aa)) enclose the RNase H type-2 domain. Positions 6, 7, and 101 each coordinate a divalent metal cation.

Belongs to the RNase HII family. Mn(2+) serves as cofactor. It depends on Mg(2+) as a cofactor.

The protein localises to the cytoplasm. The enzyme catalyses Endonucleolytic cleavage to 5'-phosphomonoester.. Functionally, endonuclease that specifically degrades the RNA of RNA-DNA hybrids. The sequence is that of Ribonuclease HII from Methanoregula boonei (strain DSM 21154 / JCM 14090 / 6A8).